A 617-amino-acid polypeptide reads, in one-letter code: Ceramide transfer protein (617 aa).

A compositionally biased stretch (polar residues) spans 1 to 11 (MSDNQSWNSSG). A disordered region spans residues 1–23 (MSDNQSWNSSGSEEDLETESGPP). Positions 23-117 (PVERCGVLSK…WIDSIEQHKS (95 aa)) constitute a PH domain. The stretch at 268 to 302 (REDSWQKRLDKEIEKRRRVEEAYKNAMTELKKKSH) forms a coiled coil. The FFAT signature appears at 320 to 326 (EFFDAVE). Over residues 332–344 (QDKIEQSQSEKGR) the composition is skewed to basic and acidic residues. The interval 332-355 (QDKIEQSQSEKGRSHWPSSLPSTE) is disordered. The START domain occupies 383–611 (DEHRFRIQVE…FTSYVQEKTA (229 aa)). An N-acylsphing-4-enine is bound by residues E466, Q487, N524, and Y572.

Its subcellular location is the cytoplasm. The protein localises to the golgi apparatus. It localises to the endoplasmic reticulum. It carries out the reaction N-hexadecanoylsphing-4-enine(in) = N-hexadecanoylsphing-4-enine(out). Its function is as follows. May mediate the intracellular trafficking of ceramide in a non-vesicular manner. The sequence is that of Ceramide transfer protein (cert1) from Xenopus tropicalis (Western clawed frog).